A 259-amino-acid chain; its full sequence is Ribonuclease HII (259 aa).

Residues 70-258 (TLIAGIDEVG…VKSLVLGKKE (189 aa)) form the RNase H type-2 domain. Residues Asp76, Glu77, and Asp168 each coordinate a divalent metal cation.

It belongs to the RNase HII family. Requires Mn(2+) as cofactor. It depends on Mg(2+) as a cofactor.

The protein resides in the cytoplasm. It catalyses the reaction Endonucleolytic cleavage to 5'-phosphomonoester.. In terms of biological role, endonuclease that specifically degrades the RNA of RNA-DNA hybrids. This Streptococcus pneumoniae (strain Taiwan19F-14) protein is Ribonuclease HII.